The primary structure comprises 125 residues: Temptin (125 aa).

The first 22 residues, 1–22 (MEQKRTLRVFLAVSLLCALANA), serve as a signal peptide directing secretion. 2 disulfides stabilise this stretch: Cys40–Cys125 and Cys79–Cys99. The disordered stretch occupies residues 78-125 (LCDMDSDGDGRSNGVELGDPECVWSQGETPARTTDLSHPGFDEATVSC). The span at 103–113 (QGETPARTTDL) shows a compositional bias: polar residues.

As to quaternary structure, binds to attractin and enticin. Produced by the albumen gland of the egg cordons.

The protein localises to the secreted. Its function is as follows. A component of the complex of water-borne protein pheromones that stimulates attraction and mating behavior. Modulates pheromone signaling by direct binding to attractin. In Aplysia californica (California sea hare), this protein is Temptin.